Reading from the N-terminus, the 504-residue chain is Patatin-like phospholipase domain-containing protein 2 (504 aa).

At 1–8 (MFPREKTW) the chain is on the cytoplasmic side. The helical transmembrane segment at 9-29 (NISFAGCGFLGVYYVGVASCL) threads the bilayer. Residues 10-179 (ISFAGCGFLG…SDNLPLYELK (170 aa)) enclose the PNPLA domain. Residues 14 to 19 (GCGFLG) carry the GXGXXG motif. At 30-42 (REHAPFLVANATH) the chain is on the extracellular side. The N-linked (GlcNAc...) asparagine glycan is linked to asparagine 39. A helical membrane pass occupies residues 43–63 (IYGASAGALTATALVTGVCLG). Residues 45–49 (GASAG) carry the GXSXG motif. Catalysis depends on serine 47, which acts as the Nucleophile. At 64–137 (EAGAKFIEVS…IISHFNSKDE (74 aa)) the chain is on the cytoplasmic side. Lysine 92 is covalently cross-linked (Glycyl lysine isopeptide (Lys-Gly) (interchain with G-Cter in ubiquitin)). The helical transmembrane segment at 138–158 (LIQANVCSGFIPVYCGLIPPS) threads the bilayer. Residues 159–329 (LQGVRYVDGG…TTLSNMLPVR (171 aa)) lie on the Extracellular side of the membrane. The Proton acceptor role is filled by aspartate 166. Residues 166–168 (DGG) carry the DGA/G motif. The helical transmembrane segment at 330 to 350 (LATAMMVPYTLPLESALSFTI) threads the bilayer. At 351–504 (RLLEWLPDVP…ARPVIGALGL (154 aa)) the chain is on the cytoplasmic side. Serine 372 carries the post-translational modification Phosphoserine; in vitro. Position 404 is a phosphoserine; by PKA and FAM20C (serine 404). The residue at position 428 (serine 428) is a Phosphoserine. Residues 463-492 (APADPAPAPADPASPQHQLAGPAPLLSTPA) are disordered.

In terms of assembly, interacts with ABHD5; this association stimulates PNPLA2 triglyceride hydrolase activity. Interacts with SERPINF1; this interaction stimulates the phospholipase A2 activity of PNPLA2. Despite a colocalization in lipid droplets, it probably does not interact with PLIN. Interacts with PLIN5; prevents interaction with ABHD5. Interacts with FAF2. Post-translationally, phosphorylation at Ser-404 by PKA is increased during fasting and moderate intensity exercise, and moderately increases lipolytic activity. Phosphorylation at Ser-404 is increased upon beta-adrenergic stimulation. In terms of processing, ubiquitinated by PEX2 in response to reactive oxygen species (ROS), leading to its degradation. Ubiquitination is stimulated by LDAH. As to expression, highest expression in adipose tissue. Also detected in heart, skeletal muscle, and portions of the gastrointestinal tract. Detected in normal retina and retinoblastoma cells. Detected in retinal pigment epithelium and, at lower intensity, in the inner segments of photoreceptors and in the ganglion cell layer of the neural retina (at protein level).

The protein resides in the lipid droplet. The protein localises to the cell membrane. Its subcellular location is the cytoplasm. It catalyses the reaction a triacylglycerol + H2O = a diacylglycerol + a fatty acid + H(+). The catalysed reaction is a triacylglycerol + H2O = a 1,2-diacylglycerol + a fatty acid + H(+). The enzyme catalyses a triacylglycerol + H2O = a 1,3-diacylglycerol + a fatty acid + H(+). It carries out the reaction a triacyl-sn-glycerol + H2O = a 1,3-diacyl-sn-glycerol + a fatty acid + H(+). It catalyses the reaction a triacyl-sn-glycerol + H2O = a 2,3-diacyl-sn-glycerol + a fatty acid + H(+). The catalysed reaction is a 1-acylglycerol + a 1,3-diacylglycerol = a triacylglycerol + glycerol. The enzyme catalyses a 1-acylglycerol + a 1,2-diacylglycerol = a triacylglycerol + glycerol. It carries out the reaction 2 a 1-acylglycerol = a 1,2-diacylglycerol + glycerol. It catalyses the reaction a triacylglycerol + all-trans-retinol = an all-trans-retinyl ester + a diacylglycerol. The catalysed reaction is 1,2-di-(9Z-octadecenoyl)-glycerol + (9Z)-octadecenoate + H(+) = 1,2,3-tri-(9Z-octadecenoyl)-glycerol + H2O. The enzyme catalyses 1,2,3-tri-(9Z-octadecenoyl)-glycerol + H2O = 1,3-di-(9Z-octadecenoyl)-glycerol + (9Z)-octadecenoate + H(+). It carries out the reaction 1-(9Z-octadecenoyl)-glycerol + 1,3-di-(9Z-octadecenoyl)-glycerol = 1,2,3-tri-(9Z-octadecenoyl)-glycerol + glycerol. It catalyses the reaction 1-(9Z-octadecenoyl)-glycerol + 1,2-di-(9Z-octadecenoyl)-glycerol = 1,2,3-tri-(9Z-octadecenoyl)-glycerol + glycerol. The catalysed reaction is 2 1-(9Z-octadecenoyl)-glycerol = 1,2-di-(9Z-octadecenoyl)-glycerol + glycerol. The enzyme catalyses 1,2,3-tri-(9Z-octadecenoyl)-glycerol + all-trans-retinol = all-trans-retinyl 9Z-octadecenoate + di-(9Z)-octadecenoylglycerol. It carries out the reaction 1,2,3-tri-(9Z)-hexadecenoylglycerol + H2O = 1,3-di-(9Z)-hexadecenoylglycerol + (9Z)-hexadecenoate + H(+). It catalyses the reaction 1,2,3-tri-(9Z,12Z)-octadecadienoylglycerol + H2O = 1,3-di-(9Z,12Z)-octadecadienoylglycerol + (9Z,12Z)-octadecadienoate + H(+). The catalysed reaction is 1,2,3-tri-(9Z,12Z,15Z)-octadecatrienoylglycerol + H2O = 1,3-di-(9Z,12Z,15Z)-octadecatrienoylglycerol + (9Z,12Z,15Z)-octadecatrienoate + H(+). The enzyme catalyses 1,3-di-(9Z)-octadecenoyl-2-hexadecanoylglycerol + H2O = 1,3-di-(9Z-octadecenoyl)-glycerol + hexadecanoate + H(+). It carries out the reaction 1,2-di-(9Z)-octadecenoyl-3-hexadecanoyl-sn-glycerol + H2O = 1-(9Z)-octadecenoyl-3-hexadecanoyl-sn-glycerol + (9Z)-octadecenoate + H(+). It catalyses the reaction 1-hexadecanoyl-2,3-di-(9Z)-octadecenoyl-sn-glycerol + H2O = 1-hexadecanoyl-3-(9Z)-octadecenoyl-sn-glycerol + (9Z)-octadecenoate + H(+). The catalysed reaction is 1,2,3-tri-(9Z-octadecenoyl)-glycerol + H2O = 2,3-di-(9Z)-octadecenoyl-sn-glycerol + (9Z)-octadecenoate + H(+). The enzyme catalyses 1,2,3-tri-(9Z)-hexadecenoylglycerol + H2O = 2,3-di-(9Z)-hexadecenoyl-sn-glycerol + (9Z)-hexadecenoate + H(+). It carries out the reaction 1,2,3-tri-(9Z,12Z)-octadecadienoylglycerol + H2O = 2,3-di-(9Z,12Z)-octadecadienoyl-sn-glycerol + (9Z,12Z)-octadecadienoate + H(+). It catalyses the reaction 1,2,3-tri-(9Z,12Z,15Z)-octadecatrienoylglycerol + H2O = 2,3-di-(9Z,12Z,15Z)-octadecatrienoyl-sn-glycerol + (9Z,12Z,15Z)-octadecatrienoate + H(+). The catalysed reaction is 1,3-di-(9Z)-octadecenoyl-2-hexadecanoylglycerol + H2O = 2-hexadecanoyl-3-(9Z)-octadecenoyl-sn-glycerol + (9Z)-octadecenoate + H(+). The enzyme catalyses 1-hexadecanoyl-2,3-di-(9Z)-octadecenoyl-sn-glycerol + H2O = 2,3-di-(9Z)-octadecenoyl-sn-glycerol + hexadecanoate + H(+). It carries out the reaction 1,2-di-(9Z)-octadecenoyl-3-hexadecanoyl-sn-glycerol + H2O = 2-(9Z-octadecenoyl)-3-hexadecanoyl-sn-glycerol + (9Z)-octadecenoate + H(+). It catalyses the reaction a 1,2-diacyl-sn-glycero-3-phosphocholine + H2O = a 1-acyl-sn-glycero-3-phosphocholine + a fatty acid + H(+). The catalysed reaction is 1,2,3-tri-(9Z-octadecenoyl)-glycerol + 9-hydroxy-octadecanoate = 9-(9Z-octadecenoyloxy)-octadecanoate + 2,3-di-(9Z)-octadecenoyl-sn-glycerol. The enzyme catalyses 1-hexadecanoyl-2,3-di-(9Z)-octadecenoyl-sn-glycerol + 9-hydroxy-octadecanoate = 9-hexadecanoyloxy-octadecanoate + 2,3-di-(9Z)-octadecenoyl-sn-glycerol. It carries out the reaction 1,2,3-tri-(10Z)-heptadecenoylglycerol + 9-hydroxy-octadecanoate = 2,3-di-(10Z-heptadecenoyl)-sn-glycerol + 9-(10Z-heptadecenoyloxy)-octadecanoate. It catalyses the reaction 1,2,3-tri-(9Z,12Z)-octadecadienoylglycerol + 9-hydroxy-octadecanoate = 2,3-di-(9Z,12Z)-octadecadienoyl-sn-glycerol + 9-(9Z,12Z-octadecadienoyloxy)-octadecanoate. The catalysed reaction is 1,2,3-tri-(9Z)-hexadecenoylglycerol + 9-hydroxy-octadecanoate = 2,3-di-(9Z)-hexadecenoyl-sn-glycerol + 9-(9Z-hexadecenoyloxy)-octadecanoate. The enzyme catalyses 9-hydroxy-octadecanoate + 1,2-di-(9Z-octadecenoyl)-sn-glycerol = 9-(9Z-octadecenoyloxy)-octadecanoate + 2-(9Z-octadecenoyl)-glycerol. It carries out the reaction 1-hexadecanoyl-2,3-di-(9Z)-octadecenoyl-sn-glycerol + 9-hydroxy-octadecanoate = 1-hexadecanoyl-3-(9Z)-octadecenoyl-sn-glycerol + 9-(9Z-octadecenoyloxy)-octadecanoate. It functions in the pathway glycerolipid metabolism; triacylglycerol degradation. With respect to regulation, the triglyceride lipase activity is inhibited by BEL ((E)-6-(bromomethylene)-3-(1-naphthalenyl)-2H-tetrahydropyran-2-one), a suicide substrate inhibitor. No differences in the acylglycerol transacylase was detected in the presence or absence of ATP. In terms of biological role, catalyzes the initial step in triglyceride hydrolysis in adipocyte and non-adipocyte lipid droplets. Exhibits a strong preference for the hydrolysis of long-chain fatty acid esters at the sn-2 position of the glycerol backbone and acts coordinately with LIPE/HLS and DGAT2 within the lipolytic cascade. Also possesses acylglycerol transacylase and phospholipase A2 activities. Transfers fatty acid from triglyceride to retinol, hydrolyzes retinylesters, and generates 1,3-diacylglycerol from triglycerides. Regulates adiposome size and may be involved in the degradation of adiposomes. Catalyzes the formation of an ester bond between hydroxy fatty acids and fatty acids derived from triglycerides or diglycerides to generate fatty acid esters of hydroxy fatty acids (FAHFAs) in adipocytes. Acts antagonistically with LDAH in regulation of cellular lipid stores. Inhibits LDAH-stimulated lipid droplet fusion. May play an important role in energy homeostasis. May play a role in the response of the organism to starvation, enhancing hydrolysis of triglycerides and providing free fatty acids to other tissues to be oxidized in situations of energy depletion. This Homo sapiens (Human) protein is Patatin-like phospholipase domain-containing protein 2.